The chain runs to 72 residues: uncharacterized protein (72 aa).

This is an uncharacterized protein from Saccharomyces cerevisiae (strain ATCC 204508 / S288c) (Baker's yeast).